A 502-amino-acid chain; its full sequence is Pentatricopeptide repeat-containing protein At4g01990, mitochondrial (502 aa).

The N-terminal 13 residues, 1 to 13, are a transit peptide targeting the mitochondrion; it reads MMHSVSRLARRFC. PPR repeat units lie at residues 139–173, 174–208, 209–243, 245–275, 280–310, 315–345, and 350–381; these read NQST…NHVS, NSLP…SITP, CDIT…GEGI, SWNT…LENN, VRDC…LKKR, NNSS…WEST, and DMRM…MKKC.

This sequence belongs to the PPR family. P subfamily.

It localises to the mitochondrion. This chain is Pentatricopeptide repeat-containing protein At4g01990, mitochondrial, found in Arabidopsis thaliana (Mouse-ear cress).